The primary structure comprises 457 residues: Reticulophagy regulator 3 (457 aa).

The interval 1–24 (MAQRVGEEEQGASGLRRRRSGARC) is disordered. The next 3 helical transmembrane spans lie at 80-100 (FFALTSLRIIFLVAFGLMIII), 165-185 (PGKFCLLACSFLTFLAVLGGY), and 186-206 (IPGVVLSYLLLLFLLLWPLAI). Residues 291–305 (ENGTFNLSRGQTPLT) are compositionally biased toward polar residues. Disordered stretches follow at residues 291 to 351 (ENGT…IPST) and 410 to 457 (AYAE…HSHQ). The segment covering 310-326 (DLDRHSDPEESFARDLP) has biased composition (basic and acidic residues). Residues 428-441 (LDTDAEADDFELLD) show a composition bias toward acidic residues. The LIR motif motif lies at 435 to 440 (DDFELL). The segment covering 443-457 (SELSQMDPSSSHSHQ) has biased composition (polar residues).

Belongs to the RETREG family. As to quaternary structure, interacts with ATG8 family modifier proteins.

Its subcellular location is the endoplasmic reticulum membrane. Functionally, endoplasmic reticulum (ER)-anchored autophagy regulator which exists in an inactive state under basal conditions but is activated following cellular stress. When activated, induces ER fragmentation and mediates ER delivery into lysosomes through sequestration into autophagosomes via interaction with ATG8 family proteins. Promotes ER membrane curvature and ER tubulation required for subsequent ER fragmentation and engulfment into autophagosomes. The protein is Reticulophagy regulator 3 (retreg3) of Xenopus tropicalis (Western clawed frog).